A 517-amino-acid chain; its full sequence is Legumin A (517 aa).

The signal sequence occupies residues 1–21 (MAKLLALSLSFCFLLLGGCFA). Cystine bridges form between C31/C64 and C107/C339. The 197-residue stretch at 36–232 (LDALEPDNRI…AFNVNRHIVD (197 aa)) folds into the Cupin type-1 1 domain. The disordered stretch occupies residues 249–335 (VKGGLSIISP…SRRQGDNGLE (87 aa)). The region spanning 345-494 (LNIGPSSSPD…TFNLQRNEAR (150 aa)) is the Cupin type-1 2 domain.

This sequence belongs to the 11S seed storage protein (globulins) family. As to quaternary structure, hexamer; each subunit is composed of an acidic and a basic chain derived from a single precursor and linked by a disulfide bond.

In terms of biological role, this protein found in the seeds of many leguminous and non-leguminous plants is the source of sulfur-containing amino acids in seed meals. The polypeptide is Legumin A (LEGA) (Pisum sativum (Garden pea)).